The sequence spans 340 residues: MVGEMEAKEKPKPSPDYLMQLMNDKKLMSSLPNFCGIFNHLERLLDEEISRVRKDMYNDTLNGSTEKRSAELPDAVGPIVQLQEKLYVPVKEYPDFNFVGRILGPRGLTAKQLEAETGCKIMVRGKGSMRDKKKEEQNRGKPNWEHLNEDLHVLITVEDAQNRAEIKLKRAVEEVKKLLIPAAEGEDSLKKMQLMELAILNGTYRDANIKSPALAFSLAATAQAPRIITGPAPVLPPAALRTPTPAGPTIMPLIRQIQTAVMPNGTPHPTAAIVPPGPEAGLIYTPYEYPYTLAPATSILEYPIEPSGVLGAVATKVRRHDMRVHPYQRIVTADRAATGN.

One can recognise a KH domain in the interval 87–153 (YVPVKEYPDF…WEHLNEDLHV (67 aa)). The short motif at 275–278 (PPGP) is the SH3-binding element. Positions 323–329 (RVHPYQR) match the Nuclear localization signal motif.

It belongs to the quaking family. Homodimer; does not require RNA to homodimerize.

It localises to the cytoplasm. Its subcellular location is the nucleus. Functionally, RNA reader protein, which recognizes and binds specific RNAs, thereby regulating RNA metabolic processes, such as pre-mRNA splicing, circular RNA (circRNA) formation, mRNA export, mRNA stability and/or translation. Involved in various cellular processes, such as mRNA storage into stress granules, apoptosis, interferon response, glial cell fate and development. Binds to the 5'-NACUAAY-N(1,20)-UAAY-3' RNA core sequence. Acts as a mRNA modification reader that specifically recognizes and binds mRNA transcripts modified by internal N(7)-methylguanine (m7G). Promotes the formation of circular RNAs (circRNAs): acts by binding to sites flanking circRNA-forming exons. CircRNAs are produced by back-splicing circularization of pre-mRNAs. Required to protect and promote stability of mRNAs which promotes oligodendrocyte differentiation. Acts as an important regulator of muscle development. In Gallus gallus (Chicken), this protein is KH domain-containing RNA-binding protein QKI.